The following is a 119-amino-acid chain: Basic phospholipase A2 DE-1 (119 aa).

7 cysteine pairs are disulfide-bonded: Cys11–Cys71, Cys26–Cys118, Cys28–Cys44, Cys43–Cys99, Cys50–Cys92, Cys60–Cys85, and Cys78–Cys90. Positions 27, 29, 31, and 48 each coordinate Ca(2+). Residue Asp93 is part of the active site.

This sequence belongs to the phospholipase A2 family. Group I subfamily. D49 sub-subfamily. The cofactor is Ca(2+). In terms of tissue distribution, expressed by the venom gland.

It localises to the secreted. It carries out the reaction a 1,2-diacyl-sn-glycero-3-phosphocholine + H2O = a 1-acyl-sn-glycero-3-phosphocholine + a fatty acid + H(+). In terms of biological role, PLA2 catalyzes the calcium-dependent hydrolysis of the 2-acyl groups in 3-sn-phosphoglycerides. The protein is Basic phospholipase A2 DE-1 of Hemachatus haemachatus (Rinkhals).